A 328-amino-acid polypeptide reads, in one-letter code: Tetraacyldisaccharide 4'-kinase (328 aa).

58–65 (TMGGAGKT) serves as a coordination point for ATP.

Belongs to the LpxK family.

The enzyme catalyses a lipid A disaccharide + ATP = a lipid IVA + ADP + H(+). It participates in glycolipid biosynthesis; lipid IV(A) biosynthesis; lipid IV(A) from (3R)-3-hydroxytetradecanoyl-[acyl-carrier-protein] and UDP-N-acetyl-alpha-D-glucosamine: step 6/6. Transfers the gamma-phosphate of ATP to the 4'-position of a tetraacyldisaccharide 1-phosphate intermediate (termed DS-1-P) to form tetraacyldisaccharide 1,4'-bis-phosphate (lipid IVA). In Phenylobacterium zucineum (strain HLK1), this protein is Tetraacyldisaccharide 4'-kinase.